The primary structure comprises 183 residues: DNA-directed RNA polymerase subunit Rpo7 (183 aa).

In terms of domain architecture, S1 motif spans 82–164 (HEVIEGEVSQ…RLPRIALTMK (83 aa)).

This sequence belongs to the eukaryotic RPB7/RPC8 RNA polymerase subunit family. As to quaternary structure, part of the 13-subunit RNA polymerase complex. Forms a stalk with Rpo4 that extends from the main structure.

It is found in the cytoplasm. The catalysed reaction is RNA(n) + a ribonucleoside 5'-triphosphate = RNA(n+1) + diphosphate. Its function is as follows. DNA-dependent RNA polymerase (RNAP) catalyzes the transcription of DNA into RNA using the four ribonucleoside triphosphates as substrates. Reconstitution experiments show this subunit is required for basic activity. The polypeptide is DNA-directed RNA polymerase subunit Rpo7 (Sulfolobus acidocaldarius (strain ATCC 33909 / DSM 639 / JCM 8929 / NBRC 15157 / NCIMB 11770)).